Consider the following 104-residue polypeptide: Flagellar hook-basal body complex protein FliE (104 aa).

This sequence belongs to the FliE family.

The protein resides in the bacterial flagellum basal body. The sequence is that of Flagellar hook-basal body complex protein FliE from Escherichia fergusonii (strain ATCC 35469 / DSM 13698 / CCUG 18766 / IAM 14443 / JCM 21226 / LMG 7866 / NBRC 102419 / NCTC 12128 / CDC 0568-73).